The chain runs to 230 residues: CASP-like protein 2A2 (230 aa).

The interval 1–23 is disordered; it reads MEKKDEGNPPMAVMGSRDENEDV. At 1 to 29 the chain is on the cytoplasmic side; it reads MEKKDEGNPPMAVMGSRDENEDVKSTMRT. Residues 30–50 form a helical membrane-spanning segment; sequence AETMLRLVPVALCVSALVVML. At 51–71 the chain is on the extracellular side; that stretch reads KNTQTNDYGSLSYSDLGAFRY. Residues 72–92 form a helical membrane-spanning segment; it reads LVNANGICAGYSLLSAVIVAM. The Cytoplasmic segment spans residues 93-100; the sequence is PRAWTMPQ. The chain crosses the membrane as a helical span at residues 101–121; it reads AWTFFLLDQVLTYVILAAGTV. Residues 122–151 are Extracellular-facing; it reads STEVLYLANKGDTSIAWSAACASFGGFCHK. A helical transmembrane segment spans residues 152–172; it reads ALISTVITFVAVIFYAALSLV. The Cytoplasmic segment spans residues 173-230; the sequence is SSYKLFSKYDAPVVTQSGEGIKTVTLGSPPPPPPPPPSNLHLHLHAKLACPAHNNSPN.

Belongs to the Casparian strip membrane proteins (CASP) family. In terms of assembly, homodimer and heterodimers.

The protein resides in the cell membrane. This chain is CASP-like protein 2A2, found in Populus trichocarpa (Western balsam poplar).